We begin with the raw amino-acid sequence, 141 residues long: MQLTSFTDYGLRALIYMASLPEGRMTSISEVTDVYGVSRNHMVKIINQLSRAGYVTAVRGKNGGIRLGKPASAIRIGDVVRELEPLSLVNCSSEFCHITPACRLKQALSKAVQSFLTELDNYTLADLVEENQPLYKLLLVE.

The 128-residue stretch at 2–129 (QLTSFTDYGL…DNYTLADLVE (128 aa)) folds into the HTH rrf2-type domain. Positions 28 to 51 (ISEVTDVYGVSRNHMVKIINQLSR) form a DNA-binding region, H-T-H motif. Residues Cys-91, Cys-96, and Cys-102 each coordinate [2Fe-2S] cluster.

Requires [2Fe-2S] cluster as cofactor.

In terms of biological role, nitric oxide-sensitive repressor of genes involved in protecting the cell against nitrosative stress. May require iron for activity. The chain is HTH-type transcriptional repressor NsrR from Escherichia coli O127:H6 (strain E2348/69 / EPEC).